A 148-amino-acid polypeptide reads, in one-letter code: Short form salivary protein D7S1 (148 aa).

The signal sequence occupies residues 1-21 (MKQNVFFLIAYFSLVFCMCNA). 3 disulfide bridges follow: Cys-28/Cys-61, Cys-41/Cys-147, and Cys-103/Cys-119.

This sequence belongs to the PBP/GOBP family. Female salivary gland.

It localises to the secreted. In terms of biological role, in contrast to the related D7 salivary proteins that can bind biogenic amines, does not bind serotonin. The protein is Short form salivary protein D7S1 of Aedes aegypti (Yellowfever mosquito).